We begin with the raw amino-acid sequence, 951 residues long: Valine--tRNA ligase (951 aa).

The short motif at 42–52 is the 'HIGH' region element; that stretch reads PNVTGSLHMGH. The 'KMSKS' region motif lies at 554–558; that stretch reads KMSKS. ATP is bound at residue Lys-557. A coiled-coil region spans residues 880-944; it reads AGLINKEDEL…AEAKAKLIEQ (65 aa).

Belongs to the class-I aminoacyl-tRNA synthetase family. ValS type 1 subfamily. As to quaternary structure, monomer.

The protein resides in the cytoplasm. It catalyses the reaction tRNA(Val) + L-valine + ATP = L-valyl-tRNA(Val) + AMP + diphosphate. In terms of biological role, catalyzes the attachment of valine to tRNA(Val). As ValRS can inadvertently accommodate and process structurally similar amino acids such as threonine, to avoid such errors, it has a 'posttransfer' editing activity that hydrolyzes mischarged Thr-tRNA(Val) in a tRNA-dependent manner. The sequence is that of Valine--tRNA ligase from Escherichia coli O6:H1 (strain CFT073 / ATCC 700928 / UPEC).